Reading from the N-terminus, the 2273-residue chain is Retinal-specific phospholipid-transporting ATPase ABCA4 (2273 aa).

Residues 1–21 are Cytoplasmic-facing; that stretch reads MGFVRQIQLLLWKNWTLRKRQ. A helical membrane pass occupies residues 22–42; sequence KIRFVVELVWPLSLFLVLIWL. At 43–646 the chain is on the extracellular side; the sequence is RNANPLYSHH…MPYPCFVDDS (604 aa). Disulfide bonds link C54-C81 and C75-C324. An N-linked (GlcNAc...) asparagine glycan is attached at N98. Mg(2+)-binding residues include S336 and N338. A disulfide bridge links C370 with C519. Residues N415, N444, and N504 are each glycosylated (N-linked (GlcNAc...) asparagine). An N-all-trans-retinylidenephosphatidylethanolamine-binding residues include R587 and R653. 3 cysteine pairs are disulfide-bonded: C641–C1490, C1444–C1455, and C1488–C1502. Residues 647–667 form a helical membrane-spanning segment; the sequence is FMIILNRCFPIFMVLAWIYSV. Residues 668 to 699 are Cytoplasmic-facing; it reads SMTVKSIVLEKELRLKETLKNQGVSNAVIWCT. Residues 700-720 form a helical membrane-spanning segment; it reads WFLDSFSIMSMSIFLLTIFIM. The Extracellular segment spans residues 721–730; it reads HGRILHYSDP. The helical transmembrane segment at 731–751 threads the bilayer; that stretch reads FILFLFLLAFSTATIMLCFLL. Residues 752-759 are Cytoplasmic-facing; sequence STFFSKAS. Residues 760 to 780 traverse the membrane as a helical segment; the sequence is LAAACSGVIYFTLYLPHILCF. The Extracellular segment spans residues 781–835; that stretch reads AWQDRMTAELKKAVSLLSPVAFGFGTEYLVRFEEQGLGLQWSNIGNSPTEGDEFS. Residues 836 to 856 form a helical membrane-spanning segment; sequence FLLSMQMMLLDAAVYGLLAWY. At 857–1376 the chain is on the cytoplasmic side; sequence LDQVFPGDYG…IRSHKDFLAQ (520 aa). The disordered stretch occupies residues 891 to 911; it reads ERALEKTEPLTEETEDPEHPE. Phosphothreonine is present on T901. The ABC transporter 1 domain occupies 929-1160; it reads VCVKNLVKIF…FGTGLYLTLV (232 aa). 3 residues coordinate ATP: F938, G966, and K969. T970 provides a ligand contact to Mg(2+). ATP-binding residues include T971, Q1010, K1054, G1064, G1065, and H1118. Residue S1185 is modified to Phosphoserine. The tract at residues 1284-1345 is disordered; that stretch reads PLFAGGAQQK…EPECPGPQLN (62 aa). T1313 is modified (phosphothreonine). S1317 carries the phosphoserine modification. A compositionally biased stretch (pro residues) spans 1331 to 1340; the sequence is GQPPPEPECP. Residues 1377 to 1397 form a helical membrane-spanning segment; that stretch reads IVLPATFVFLALMLSIVIPPF. Residues 1398–1727 are Extracellular-facing; that stretch reads GEYPALTLHP…VSPTTYWVTN (330 aa). N1469 is a glycosylation site (N-linked (GlcNAc...) asparagine). N-linked (GlcNAc...) asparagine glycans are attached at residues N1529, N1588, and N1662. Residues 1728–1748 form a helical membrane-spanning segment; the sequence is FLWDIMNYSVSAGLVVGIFIG. Over 1749–1759 the chain is Cytoplasmic; that stretch reads FQKKAYTSPEN. The chain crosses the membrane as a helical span at residues 1760 to 1780; it reads LPALVALLLLYGWAVIPMMYP. Topologically, residues 1781–1792 are extracellular; sequence ASFLFDVPSTAY. The helical transmembrane segment at 1793–1813 threads the bilayer; that stretch reads VALSCANLFIGINSSAITFIL. The Cytoplasmic portion of the chain corresponds to 1814-1831; it reads ELFENNRTLLRFNAVLRK. The chain crosses the membrane as a helical span at residues 1832–1852; it reads LLIVFPHFCLGRGLIDLALSQ. Topologically, residues 1853-1873 are extracellular; sequence AVTDVYARFGEEHSANPFHWD. The chain crosses the membrane as a helical span at residues 1874 to 1894; sequence LIGKNLFAMVVEGVVYFLLTL. At 1895–2273 the chain is on the cytoplasmic side; sequence LVQRHFFLSQ…AAGASRQAQD (379 aa). Residues 1938 to 2170 enclose the ABC transporter 2 domain; sequence LRLHELTKIY…FGDGYIVTMK (233 aa). 6 residues coordinate ATP: N1974, G1975, K1978, T1979, T1980, and G2073. Residue T1979 participates in Mg(2+) binding. Residues 2244 to 2249 form an essential for ATP binding and ATPase activity region; it reads VFVNFA.

It belongs to the ABC transporter superfamily. ABCA family. In terms of processing, proteolytic cleavage by trypsin leads to a 120-kDa N-terminal fragment and a 115-kDa C-terminal fragment that are linked through disulfide bonds. N-glycosylated. Post-translationally, phosphorylation is independent of light exposure and modulates ATPase activity. As to expression, retinal-specific. Seems to be exclusively found in the rims of rod photoreceptor cells.

The protein localises to the membrane. It is found in the endoplasmic reticulum. It localises to the cytoplasmic vesicle. The protein resides in the cell projection. Its subcellular location is the cilium. The protein localises to the photoreceptor outer segment. It carries out the reaction an N-all-trans-retinylidenephosphatidylethanolamine(out) + ATP + H2O = an N-all-trans-retinylidenephosphatidylethanolamine(in) + ADP + phosphate + H(+). The enzyme catalyses ATP + H2O + phospholipidSide 1 = ADP + phosphate + phospholipidSide 2.. It catalyses the reaction a 1,2-diacyl-sn-glycero-3-phosphoethanolamine(out) + ATP + H2O = a 1,2-diacyl-sn-glycero-3-phosphoethanolamine(in) + ADP + phosphate + H(+). The catalysed reaction is N-11-cis-retinylidenephosphatidylethanolamine(out) + ATP + H2O = N-11-cis-retinylidenephosphatidylethanolamine(in) + ADP + phosphate + H(+). It carries out the reaction ATP + H2O = ADP + phosphate + H(+). Its activity is regulated as follows. ATPase activity is decreased by cholesterol and ceramide. Phospholipids translocase activity is highly reduced by berylium fluoride and aluminum floride. N-ethylmaleimide inhibits phospholipid translocase activity. Flippase that catalyzes in an ATP-dependent manner the transport of retinal-phosphatidylethanolamine conjugates like 11-cis and all-trans isomers of N-retinylidene-phosphatidylethanolamine (N-Ret-PE) from the lumen to the cytoplasmic leaflet of photoreceptor outer segment disk membranes, where 11-cis-retinylidene-phosphatidylethanolamine is then isomerized to its all-trans isomer and reduced by RDH8 to produce all-trans-retinol. This transport activity ensures that all-trans-retinal generated from photoexcitation and 11-cis-retinal not needed for the regeneration of rhodopsin and cone opsins are effectively cleared from the photoreceptors, therefore preventing their accumulation and the formation of toxic bisretinoid. Displays ATPase activity in vitro in absence of retinal substrate. May display GTPase activity that is strongly influenced by the lipid environment and the presence of retinoid compounds. Binds the unprotonated form of N-retinylidene-phosphatidylethanolamine with high affinity in the absence of ATP, and ATP binding and hydrolysis induce a protein conformational change that causes N-retinylidene-phosphatidylethanolamine release. The polypeptide is Retinal-specific phospholipid-transporting ATPase ABCA4 (Homo sapiens (Human)).